The primary structure comprises 122 residues: Transcription initiation factor IIA subunit 2 (122 aa).

A phosphoserine mark is found at serine 95 and serine 102.

Belongs to the TFIIA subunit 2 family. As to quaternary structure, TFIIA is a heterodimer composed of the large TOA1 and a small TOA2 subunits. Interacts with TBP. Interacts with TAF11. Interacts with KAP122.

The protein localises to the cytoplasm. The protein resides in the nucleus. In terms of biological role, TFIIA is a component of the transcription machinery of RNA polymerase II and plays an important role in transcriptional activation. TFIIA in a complex with TBP mediates transcriptional activity. The protein is Transcription initiation factor IIA subunit 2 (TOA2) of Saccharomyces cerevisiae (strain ATCC 204508 / S288c) (Baker's yeast).